A 306-amino-acid polypeptide reads, in one-letter code: 2-phospho-L-lactate transferase (306 aa).

7,8-didemethyl-8-hydroxy-5-deazariboflavin is bound at residue Asp-48.

This sequence belongs to the CofD family. In terms of assembly, homodimer. The cofactor is Mg(2+).

It catalyses the reaction (2S)-lactyl-2-diphospho-5'-guanosine + 7,8-didemethyl-8-hydroxy-5-deazariboflavin = oxidized coenzyme F420-0 + GMP + H(+). Its pathway is cofactor biosynthesis; coenzyme F420 biosynthesis. Catalyzes the transfer of the 2-phospholactate moiety from (2S)-lactyl-2-diphospho-5'-guanosine to 7,8-didemethyl-8-hydroxy-5-deazariboflavin (FO) with the formation of oxidized coenzyme F420-0 and GMP. This Methanococcoides burtonii (strain DSM 6242 / NBRC 107633 / OCM 468 / ACE-M) protein is 2-phospho-L-lactate transferase.